A 420-amino-acid chain; its full sequence is Argininosuccinate synthase (420 aa).

Residues 9–17 and A35 contribute to the ATP site; that span reads AYSGGLDTS. Residues Y86 and S91 each contribute to the L-citrulline site. 114-122 provides a ligand contact to ATP; that stretch reads SHGCTGKGN. The L-aspartate site is built by T118, N122, and D123. N122 serves as a coordination point for L-citrulline. 5 residues coordinate L-citrulline: R126, S179, S188, E273, and Y285.

Belongs to the argininosuccinate synthase family. Type 1 subfamily. As to quaternary structure, homotetramer.

It localises to the cytoplasm. It carries out the reaction L-citrulline + L-aspartate + ATP = 2-(N(omega)-L-arginino)succinate + AMP + diphosphate + H(+). It participates in amino-acid biosynthesis; L-arginine biosynthesis; L-arginine from L-ornithine and carbamoyl phosphate: step 2/3. Functionally, catalyzes the eighth step in arginine biosynthesis. Also has a catabolic function as the first enzyme of citrulline utilization as nitrogen source via arginine and the reactions involved in the arginase pathway. The polypeptide is Argininosuccinate synthase (ARG1) (Saccharomyces cerevisiae (strain ATCC 204508 / S288c) (Baker's yeast)).